Consider the following 390-residue polypeptide: Galactokinase (390 aa).

Residue 33 to 36 (EHTD) participates in substrate binding. ATP contacts are provided by residues Ser67 and 124–130 (GAGLSSS). Mg(2+) contacts are provided by Ser130 and Glu162. The active-site Proton acceptor is the Asp174. Tyr224 contacts substrate.

It belongs to the GHMP kinase family. GalK subfamily.

The protein resides in the cytoplasm. The catalysed reaction is alpha-D-galactose + ATP = alpha-D-galactose 1-phosphate + ADP + H(+). It functions in the pathway carbohydrate metabolism; galactose metabolism. Catalyzes the transfer of the gamma-phosphate of ATP to D-galactose to form alpha-D-galactose-1-phosphate (Gal-1-P). This chain is Galactokinase, found in Exiguobacterium sibiricum (strain DSM 17290 / CCUG 55495 / CIP 109462 / JCM 13490 / 255-15).